Here is a 90-residue protein sequence, read N- to C-terminus: Cell division topological specificity factor (90 aa).

The protein belongs to the MinE family.

In terms of biological role, prevents the cell division inhibition by proteins MinC and MinD at internal division sites while permitting inhibition at polar sites. This ensures cell division at the proper site by restricting the formation of a division septum at the midpoint of the long axis of the cell. The sequence is that of Cell division topological specificity factor from Francisella philomiragia subsp. philomiragia (strain ATCC 25017 / CCUG 19701 / FSC 153 / O#319-036).